The chain runs to 994 residues: Translocase of chloroplast 108, chloroplastic (994 aa).

Disordered stretches follow at residues 14-61 (KEAS…EDEP), 84-124 (TTDL…DPSV), and 152-287 (AVDG…DETR). 2 stretches are compositionally biased toward polar residues: residues 37-53 (GETT…ANES) and 84-98 (TTDL…TPSN). A compositionally biased stretch (basic and acidic residues) spans 99–121 (AEKESPEATEVRIVEEGKLEKAD). The span at 166–197 (NDGDTDANTADEDNENDEDDVDEDEDEDDADM) shows a compositional bias: acidic residues. A compositionally biased stretch (polar residues) spans 249–268 (ASDSPGRNTQRPNGALSTQI). Residues 269 to 280 (TSTTDESASSDA) show a composition bias toward low complexity. In terms of domain architecture, AIG1-type G spans 360-589 (DFACTILVLG…KLQETTAPGR (230 aa)). A G1 region spans residues 369 to 376 (GKTGVGKS). 372–377 (GVGKSS) provides a ligand contact to GTP. Serine 376 is a Mg(2+) binding site. Positions 395–399 (PSTNK) are G2. Residues 416–419 (DTPG) form a G3 region. A G4 region spans residues 488–491 (THAS). GTP-binding positions include histidine 489 and 537–538 (EN). The segment at 537 to 539 (ENH) is G5. Disordered regions lie at residues 616-659 (LPDE…EDLT) and 691-716 (EAKK…EAGN). Residues 620–643 (QAGESDESDDDEEEEDSDADDYDE) are compositionally biased toward acidic residues. Positions 650-659 (LSKEELEDLT) are enriched in basic and acidic residues. The segment covering 705–714 (AEAEEAEDEA) has biased composition (acidic residues). A helical transmembrane segment spans residues 969 to 989 (MVLIGIVPILRSLINCRFGFG).

The protein belongs to the TRAFAC class TrmE-Era-EngA-EngB-Septin-like GTPase superfamily. AIG1/Toc34/Toc159-like paraseptin GTPase family. TOC159 subfamily. As to quaternary structure, part of the TOC core complex. Mg(2+) serves as cofactor.

Its subcellular location is the plastid. The protein resides in the chloroplast outer membrane. Functionally, GTPase involved in protein precursor import into chloroplasts. Seems to recognize chloroplast-destined precursor proteins and regulate their presentation to the translocation channel through GTP hydrolysis. Probably specialized in the import of nuclear encoded non-photosynthetic preproteins from the cytoplasm to the chloroplast. The protein is Translocase of chloroplast 108, chloroplastic of Physcomitrium patens (Spreading-leaved earth moss).